Here is a 455-residue protein sequence, read N- to C-terminus: Bifunctional protein GlmU (455 aa).

A pyrophosphorylase region spans residues 1–226; sequence MSLDIVILAA…AMEVQGANDR (226 aa). Residues 8–11, lysine 22, glutamine 73, 78–79, 99–101, glycine 136, glutamate 151, asparagine 166, and asparagine 224 each bind UDP-N-acetyl-alpha-D-glucosamine; these read LAAG, GT, and YGD. Aspartate 101 contributes to the Mg(2+) binding site. Asparagine 224 lines the Mg(2+) pocket. The tract at residues 227-247 is linker; the sequence is RQLSELERHYQLREGRRLMAQ. An N-acetyltransferase region spans residues 248–455; the sequence is GVTLRDPARF…WKRPEKIKKS (208 aa). Arginine 330 and lysine 348 together coordinate UDP-N-acetyl-alpha-D-glucosamine. The Proton acceptor role is filled by histidine 360. Residues tyrosine 363 and asparagine 374 each coordinate UDP-N-acetyl-alpha-D-glucosamine. Residues alanine 377, 383–384, serine 402, alanine 420, and arginine 437 each bind acetyl-CoA; that span reads NY.

In the N-terminal section; belongs to the N-acetylglucosamine-1-phosphate uridyltransferase family. This sequence in the C-terminal section; belongs to the transferase hexapeptide repeat family. In terms of assembly, homotrimer. Requires Mg(2+) as cofactor.

It is found in the cytoplasm. It catalyses the reaction alpha-D-glucosamine 1-phosphate + acetyl-CoA = N-acetyl-alpha-D-glucosamine 1-phosphate + CoA + H(+). The enzyme catalyses N-acetyl-alpha-D-glucosamine 1-phosphate + UTP + H(+) = UDP-N-acetyl-alpha-D-glucosamine + diphosphate. The protein operates within nucleotide-sugar biosynthesis; UDP-N-acetyl-alpha-D-glucosamine biosynthesis; N-acetyl-alpha-D-glucosamine 1-phosphate from alpha-D-glucosamine 6-phosphate (route II): step 2/2. It functions in the pathway nucleotide-sugar biosynthesis; UDP-N-acetyl-alpha-D-glucosamine biosynthesis; UDP-N-acetyl-alpha-D-glucosamine from N-acetyl-alpha-D-glucosamine 1-phosphate: step 1/1. It participates in bacterial outer membrane biogenesis; LPS lipid A biosynthesis. In terms of biological role, catalyzes the last two sequential reactions in the de novo biosynthetic pathway for UDP-N-acetylglucosamine (UDP-GlcNAc). The C-terminal domain catalyzes the transfer of acetyl group from acetyl coenzyme A to glucosamine-1-phosphate (GlcN-1-P) to produce N-acetylglucosamine-1-phosphate (GlcNAc-1-P), which is converted into UDP-GlcNAc by the transfer of uridine 5-monophosphate (from uridine 5-triphosphate), a reaction catalyzed by the N-terminal domain. This chain is Bifunctional protein GlmU, found in Pseudomonas putida (strain ATCC 47054 / DSM 6125 / CFBP 8728 / NCIMB 11950 / KT2440).